The chain runs to 62 residues: Beta-defensin 33 (62 aa).

An N-terminal signal peptide occupies residues 1 to 20 (MRLLFLLFILLVCLAQTTSG). Disulfide bonds link cysteine 30–cysteine 59, cysteine 37–cysteine 52, and cysteine 45–cysteine 60.

The protein belongs to the beta-defensin family.

It localises to the secreted. Its function is as follows. Has antibacterial activity. This is Beta-defensin 33 (Defb33) from Mus musculus (Mouse).